Here is a 233-residue protein sequence, read N- to C-terminus: MADS-box transcription factor 20 (233 aa).

The MADS-box domain occupies Met1–His61. In terms of domain architecture, K-box spans Glu91–Cys184.

In terms of tissue distribution, expressed in developing seeds and seedling shoots.

The protein localises to the nucleus. Functionally, probable transcription factor. The polypeptide is MADS-box transcription factor 20 (MADS20) (Oryza sativa subsp. japonica (Rice)).